Here is a 119-residue protein sequence, read N- to C-terminus: MPTSSNDLYQTRLDVQTPNRWFLYISLELFNNMYSPFRSSSVLLSGAQSDIPKVGKCLFLPCRSLEFRASANSLSVHFLLNVISAILSMLIERYAVEVIMSKITWPRSNEDWRFHGIKG.

A helical membrane pass occupies residues 74–91; sequence LSVHFLLNVISAILSMLI.

The protein localises to the membrane. This is an uncharacterized protein from Schizosaccharomyces pombe (strain 972 / ATCC 24843) (Fission yeast).